A 239-amino-acid chain; its full sequence is tRNA (guanine-N(7)-)-methyltransferase (239 aa).

S-adenosyl-L-methionine contacts are provided by Glu-69, Glu-94, Asp-121, and Asp-144. The active site involves Asp-144. Residues Lys-148, Asp-180, and 217–220 (TKFE) contribute to the substrate site.

Belongs to the class I-like SAM-binding methyltransferase superfamily. TrmB family. Monomer.

The enzyme catalyses guanosine(46) in tRNA + S-adenosyl-L-methionine = N(7)-methylguanosine(46) in tRNA + S-adenosyl-L-homocysteine. It participates in tRNA modification; N(7)-methylguanine-tRNA biosynthesis. Its function is as follows. Catalyzes the formation of N(7)-methylguanine at position 46 (m7G46) in tRNA. This chain is tRNA (guanine-N(7)-)-methyltransferase, found in Buchnera aphidicola subsp. Acyrthosiphon pisum (strain Tuc7).